We begin with the raw amino-acid sequence, 853 residues long: Trimethylguanosine synthase (853 aa).

A disordered region spans residues 53 to 80; it reads NNSGDQATEEEEGGYSCGTAESHDSKGI. Phosphoserine is present on S55. T60 bears the Phosphothreonine mark. S85, S89, S96, and S141 each carry phosphoserine. The residue at position 146 (Y146) is a Phosphotyrosine. Residues 149-187 are disordered; that stretch reads DDILASDDPSSIEQYENTRTYELQSKKDTETENPPVENT. The residue at position 154 (S154) is a Phosphoserine. Over residues 156 to 171 the composition is skewed to polar residues; sequence DPSSIEQYENTRTYEL. The residue at position 189 (S189) is a Phosphoserine. 2 disordered regions span residues 334–461 and 527–632; these read SQLD…GGIP and DEEA…KKVN. The segment covering 367–382 has biased composition (low complexity); that stretch reads NGGTNEESNSSGNTNT. Residues S412, S438, and S578 each carry the phosphoserine modification. The span at 431–442 shows a compositional bias: acidic residues; the sequence is DIDENPASDFDD. The segment covering 564-578 has biased composition (polar residues); that stretch reads ETNNPEPEKCQSVSS. Residues 608–619 are compositionally biased toward basic and acidic residues; it reads PDSRQAETEAEV. Residues 620–630 show a composition bias toward basic residues; it reads KKKKNKKKNKK. The segment at 631-846 is sufficient for catalytic activity; the sequence is VNGLPPEIAA…TITAYFGDLI (216 aa). D719 provides a ligand contact to S-adenosyl-L-methionine. W766 contributes to the N(7)-methylguanosine binding site.

Belongs to the methyltransferase superfamily. Trimethylguanosine synthase family. May form homooligomers. Interacts with CREBBP/CBP, EED/WAIT1, EP300/P300, NCOA6/PRIP, PPARBP/PBP and SMN. Ubiquitously expressed. High expression in heart, skeletal muscle, kidney, liver and placenta.

The protein localises to the cytoplasm. It is found in the nucleus. It localises to the cajal body. Its subcellular location is the nucleolus. It carries out the reaction a 5'-end (N(7)-methyl 5'-triphosphoguanosine)-ribonucleoside in snRNA + S-adenosyl-L-methionine = a 5'-end (N(2),N(7)-dimethyl 5'-triphosphoguanosine)-ribonucleoside in snRNA + S-adenosyl-L-homocysteine + H(+). It catalyses the reaction a 5'-end (N(7)-methyl 5'-triphosphoguanosine)-ribonucleoside in snoRNA + S-adenosyl-L-methionine = a 5'-end (N(2),N(7)-dimethyl 5'-triphosphoguanosine)-ribonucleoside in snoRNA + S-adenosyl-L-homocysteine + H(+). The catalysed reaction is a 5'-end (N(2),N(7)-dimethyl 5'-triphosphoguanosine)-ribonucleoside in snRNA + S-adenosyl-L-methionine = a 5'-end (N(2),N(2),N(7)-trimethyl 5'-triphosphoguanosine)-ribonucleoside in snRNA + S-adenosyl-L-homocysteine + H(+). The enzyme catalyses a 5'-end (N(2),N(7)-dimethyl 5'-triphosphoguanosine)-ribonucleoside in snoRNA + S-adenosyl-L-methionine = a 5'-end (N(2),N(2),N(7)-trimethyl 5'-triphosphoguanosine)-ribonucleoside in snoRNA + S-adenosyl-L-homocysteine + H(+). Functionally, catalyzes the 2 serial methylation steps for the conversion of the 7-monomethylguanosine (m(7)G) caps of snRNAs and snoRNAs to a 2,2,7-trimethylguanosine (m(2,2,7)G) cap structure. The enzyme is specific for guanine, and N7 methylation must precede N2 methylation. Hypermethylation of the m7G cap of U snRNAs leads to their concentration in nuclear foci, their colocalization with coilin and the formation of canonical Cajal bodies (CBs). Plays a role in transcriptional regulation. The chain is Trimethylguanosine synthase (TGS1) from Homo sapiens (Human).